Consider the following 253-residue polypeptide: Probable transcriptional regulatory protein Tlet_1011 (253 aa).

This sequence belongs to the TACO1 family.

The protein localises to the cytoplasm. This is Probable transcriptional regulatory protein Tlet_1011 from Pseudothermotoga lettingae (strain ATCC BAA-301 / DSM 14385 / NBRC 107922 / TMO) (Thermotoga lettingae).